The chain runs to 137 residues: Mediator of RNA polymerase II transcription subunit 21 (137 aa).

The tract at residues proline 37–proline 56 is disordered. The stretch at glycine 87–threonine 130 forms a coiled coil.

The protein belongs to the Mediator complex subunit 21 family. In terms of assembly, component of the Mediator complex.

It localises to the nucleus. Its function is as follows. Component of the Mediator complex, a coactivator involved in the regulated transcription of nearly all RNA polymerase II-dependent genes. Mediator functions as a bridge to convey information from gene-specific regulatory proteins to the basal RNA polymerase II transcription machinery. Mediator is recruited to promoters by direct interactions with regulatory proteins and serves as a scaffold for the assembly of a functional preinitiation complex with RNA polymerase II and the general transcription factors. In Neurospora crassa (strain ATCC 24698 / 74-OR23-1A / CBS 708.71 / DSM 1257 / FGSC 987), this protein is Mediator of RNA polymerase II transcription subunit 21 (srb-7).